A 209-amino-acid chain; its full sequence is 3-demethoxyubiquinol 3-hydroxylase (209 aa).

6 residues coordinate Fe cation: Glu-58, Glu-88, His-91, Glu-140, Glu-172, and His-175.

This sequence belongs to the COQ7 family. Requires Fe cation as cofactor.

Its subcellular location is the cell membrane. It carries out the reaction a 5-methoxy-2-methyl-3-(all-trans-polyprenyl)benzene-1,4-diol + AH2 + O2 = a 3-demethylubiquinol + A + H2O. The protein operates within cofactor biosynthesis; ubiquinone biosynthesis. In terms of biological role, catalyzes the hydroxylation of 2-nonaprenyl-3-methyl-6-methoxy-1,4-benzoquinol during ubiquinone biosynthesis. This Polynucleobacter necessarius subsp. necessarius (strain STIR1) protein is 3-demethoxyubiquinol 3-hydroxylase.